The sequence spans 255 residues: Myb-related protein Zm38 (255 aa).

HTH myb-type domains follow at residues 9–61 (KAHT…INYL) and 62–116 (RPDL…RRKL). 2 consecutive DNA-binding regions (H-T-H motif) follow at residues 37 to 61 (WRSL…INYL) and 89 to 112 (WSLI…NTHV).

It localises to the nucleus. In terms of biological role, transcription factor that negatively regulates genes involved in anthocyanin biosynthesis. The sequence is that of Myb-related protein Zm38 from Zea mays (Maize).